Reading from the N-terminus, the 185-residue chain is MIEVRFHGRGGQGAVTAANILAEAAFLEGKYVQAFPFFGVERRGAPVTAFTRIDNKPIRIKTQIYEPDVVVVLDPSLLDAVDVTAGLKDEGIVIVNTEKSKEEVLEKLKKKPKKLAIVDATTIALEILGLPITNTAILGAVAKATGLVKIESIEEAIKDTFSGELGEKNARAAREAYEKTEVFEL.

As to quaternary structure, heterotetramer of one alpha, one beta, one delta and one gamma chain.

It carries out the reaction 2 oxidized [2Fe-2S]-[ferredoxin] + pyruvate + CoA = 2 reduced [2Fe-2S]-[ferredoxin] + acetyl-CoA + CO2 + H(+). The enzyme catalyses 3-methyl-2-oxobutanoate + 2 oxidized [2Fe-2S]-[ferredoxin] + CoA = 2-methylpropanoyl-CoA + 2 reduced [2Fe-2S]-[ferredoxin] + CO2 + H(+). The chain is Pyruvate/ketoisovalerate oxidoreductases common subunit gamma (porG) from Pyrococcus furiosus (strain ATCC 43587 / DSM 3638 / JCM 8422 / Vc1).